The following is a 262-amino-acid chain: Cutinase 1 (262 aa).

A poly(ethylene terephthalate)-binding site is contributed by Tyr-61. Ser-131 functions as the Nucleophile in the catalytic mechanism. 2 residues coordinate poly(ethylene terephthalate): Met-132 and Trp-156. Catalysis depends on charge relay system residues Asp-177 and His-209. A disulfide bridge connects residues Cys-242 and Cys-260.

This sequence belongs to the AB hydrolase superfamily.

Its subcellular location is the secreted. The protein localises to the periplasm. The enzyme catalyses (ethylene terephthalate)(n) + H2O = (ethylene terephthalate)(n-1) + 4-[(2-hydroxyethoxy)carbonyl]benzoate + H(+). The catalysed reaction is a butanoate ester + H2O = an aliphatic alcohol + butanoate + H(+). It catalyses the reaction an acetyl ester + H2O = an aliphatic alcohol + acetate + H(+). It carries out the reaction cutin + H2O = cutin monomers.. Functionally, catalyzes the hydrolysis of cutin, a polyester that forms the structure of plant cuticle. Shows esterase activity towards p-nitrophenol-linked aliphatic esters (pNP-aliphatic esters). Capable of degrading the plastic poly(ethylene terephthalate) (PET), the most abundant polyester plastic in the world. Capable of degrading the bioplastic poly(lactic acid) (PLLA). The sequence is that of Cutinase 1 from Thermobifida cellulosilytica.